Reading from the N-terminus, the 402-residue chain is Indole-3-glycerol phosphate synthase, chloroplastic (402 aa).

The N-terminal 65 residues, 1–65 (MEGLVPVQRL…SDLKESLAVS (65 aa)), are a transit peptide targeting the chloroplast.

This sequence belongs to the TrpC family. In terms of tissue distribution, expressed in leaves.

It is found in the plastid. Its subcellular location is the chloroplast. The catalysed reaction is 1-(2-carboxyphenylamino)-1-deoxy-D-ribulose 5-phosphate + H(+) = (1S,2R)-1-C-(indol-3-yl)glycerol 3-phosphate + CO2 + H2O. It participates in amino-acid biosynthesis; L-tryptophan biosynthesis; L-tryptophan from chorismate: step 4/5. Its function is as follows. Indole-3-glycerol phosphate synthase required for tryptophan biosynthesis. This is Indole-3-glycerol phosphate synthase, chloroplastic from Arabidopsis thaliana (Mouse-ear cress).